Here is a 148-residue protein sequence, read N- to C-terminus: Large ribosomal subunit protein bL9 (148 aa).

It belongs to the bacterial ribosomal protein bL9 family.

Binds to the 23S rRNA. In Lysinibacillus sphaericus (strain C3-41), this protein is Large ribosomal subunit protein bL9.